The following is a 253-amino-acid chain: tRNA (guanine-N(1)-)-methyltransferase (253 aa).

S-adenosyl-L-methionine is bound by residues Gly116 and 136–141; that span reads VGDYIL.

The protein belongs to the RNA methyltransferase TrmD family. In terms of assembly, homodimer.

The protein localises to the cytoplasm. The enzyme catalyses guanosine(37) in tRNA + S-adenosyl-L-methionine = N(1)-methylguanosine(37) in tRNA + S-adenosyl-L-homocysteine + H(+). In terms of biological role, specifically methylates guanosine-37 in various tRNAs. The protein is tRNA (guanine-N(1)-)-methyltransferase of Colwellia psychrerythraea (strain 34H / ATCC BAA-681) (Vibrio psychroerythus).